We begin with the raw amino-acid sequence, 403 residues long: D-alanyl-D-alanine carboxypeptidase DacA (403 aa).

Residues 1 to 29 form the signal peptide; that stretch reads MNTIFSARIMKRLALTTALCTAFISAAHA. The active-site Acyl-ester intermediate is Ser-73. Lys-76 functions as the Proton acceptor in the catalytic mechanism. Ser-139 is an active-site residue. Substrate is bound at residue Lys-242.

Belongs to the peptidase S11 family.

Its subcellular location is the cell inner membrane. It catalyses the reaction Preferential cleavage: (Ac)2-L-Lys-D-Ala-|-D-Ala. Also transpeptidation of peptidyl-alanyl moieties that are N-acyl substituents of D-alanine.. The protein operates within cell wall biogenesis; peptidoglycan biosynthesis. Its function is as follows. Removes C-terminal D-alanyl residues from sugar-peptide cell wall precursors. This is D-alanyl-D-alanine carboxypeptidase DacA (dacA) from Escherichia coli O157:H7.